A 670-amino-acid chain; its full sequence is Pescadillo homolog (670 aa).

Positions 292–321 (GANQAQAKVKEAESKRSLMEEELLKVRELF) form a coiled coil. The BRCT domain maps to 316–402 (KVRELFRGLT…QMLPVTGYRI (87 aa)). The segment at 643-670 (RQRAEAKGKKLKEKKADNPYKKLPKWVQ) is disordered. Positions 644 to 662 (QRAEAKGKKLKEKKADNPY) are enriched in basic and acidic residues.

Belongs to the pescadillo family.

The protein localises to the nucleus. Its subcellular location is the nucleolus. It localises to the nucleoplasm. In terms of biological role, required for maturation of ribosomal RNAs and formation of the large ribosomal subunit. The chain is Pescadillo homolog from Leishmania braziliensis.